We begin with the raw amino-acid sequence, 150 residues long: uncharacterized protein (150 aa).

Helical transmembrane passes span 48 to 68 (LFLLLFVIPTITLTTLGCFLF), 89 to 109 (VFIFIDVFGLVVSVLFGYLLP), and 123 to 143 (REVFLSLAMIVIFANSVIFTL).

To M.pneumoniae MPN_085 central region.

The protein resides in the cell membrane. This is an uncharacterized protein from Mycoplasma pneumoniae (strain ATCC 29342 / M129 / Subtype 1) (Mycoplasmoides pneumoniae).